Consider the following 446-residue polypeptide: tRNA modification GTPase MnmE (446 aa).

The (6S)-5-formyl-5,6,7,8-tetrahydrofolate site is built by R22, E80, and K119. In terms of domain architecture, TrmE-type G spans 215–370; sequence GLSLVIAGRP…LKKVIKQVVG (156 aa). K(+) is bound at residue N225. Residues 225–230, 244–250, and 269–272 each bind GTP; these read NAGKST, TEIAGTT, and DTAG. Residue S229 coordinates Mg(2+). K(+) is bound by residues T244, I246, and T249. Mg(2+) is bound at residue T250. K446 is a (6S)-5-formyl-5,6,7,8-tetrahydrofolate binding site.

This sequence belongs to the TRAFAC class TrmE-Era-EngA-EngB-Septin-like GTPase superfamily. TrmE GTPase family. In terms of assembly, homodimer. Heterotetramer of two MnmE and two MnmG subunits. The cofactor is K(+).

The protein localises to the cytoplasm. In terms of biological role, exhibits a very high intrinsic GTPase hydrolysis rate. Involved in the addition of a carboxymethylaminomethyl (cmnm) group at the wobble position (U34) of certain tRNAs, forming tRNA-cmnm(5)s(2)U34. The chain is tRNA modification GTPase MnmE from Legionella pneumophila (strain Corby).